We begin with the raw amino-acid sequence, 198 residues long: Large ribosomal subunit protein bL9 (198 aa).

A compositionally biased stretch (basic and acidic residues) spans 156–166 (RGEDISTRQED). Positions 156-198 (RGEDISTRQEDQDAAAEALAAAGEFFDPEAHNDGEQEEEAGDK) are disordered.

The protein belongs to the bacterial ribosomal protein bL9 family.

In terms of biological role, binds to the 23S rRNA. The sequence is that of Large ribosomal subunit protein bL9 from Rhodopseudomonas palustris (strain BisB18).